The sequence spans 325 residues: Methionyl-tRNA formyltransferase (325 aa).

111–114 (SILP) serves as a coordination point for (6S)-5,6,7,8-tetrahydrofolate.

The protein belongs to the Fmt family.

It carries out the reaction L-methionyl-tRNA(fMet) + (6R)-10-formyltetrahydrofolate = N-formyl-L-methionyl-tRNA(fMet) + (6S)-5,6,7,8-tetrahydrofolate + H(+). Functionally, attaches a formyl group to the free amino group of methionyl-tRNA(fMet). The formyl group appears to play a dual role in the initiator identity of N-formylmethionyl-tRNA by promoting its recognition by IF2 and preventing the misappropriation of this tRNA by the elongation apparatus. The polypeptide is Methionyl-tRNA formyltransferase (Microcystis aeruginosa (strain NIES-843 / IAM M-2473)).